Consider the following 436-residue polypeptide: 3-ketoacyl-CoA thiolase (436 aa).

Catalysis depends on Cys99, which acts as the Acyl-thioester intermediate. Catalysis depends on proton acceptor residues His392 and Cys422.

This sequence belongs to the thiolase-like superfamily. Thiolase family. In terms of assembly, heterotetramer of two alpha chains (FadJ) and two beta chains (FadI).

Its subcellular location is the cytoplasm. It carries out the reaction an acyl-CoA + acetyl-CoA = a 3-oxoacyl-CoA + CoA. The protein operates within lipid metabolism; fatty acid beta-oxidation. Functionally, catalyzes the final step of fatty acid oxidation in which acetyl-CoA is released and the CoA ester of a fatty acid two carbons shorter is formed. The protein is 3-ketoacyl-CoA thiolase of Salmonella paratyphi C (strain RKS4594).